A 68-amino-acid polypeptide reads, in one-letter code: Conotoxin TsMMSK-021 (68 aa).

A signal peptide spans 1-20; it reads MMSKLGVLLTICLLLFPLTA. A propeptide spanning residues 21 to 52 is cleaved from the precursor; that stretch reads VRLDGDQHTDRPADRMQDIATEQHPLFDPVKR. 3 disulfide bridges follow: C53–C66, C54–C62, and C58–C65. P64 carries the 4-hydroxyproline modification.

The protein belongs to the conotoxin M superfamily. As to expression, expressed by the venom duct.

It localises to the secreted. The chain is Conotoxin TsMMSK-021 from Conus tessulatus (Tessellate cone).